The chain runs to 235 residues: NAD(P)H-hydrate epimerase (235 aa).

The YjeF N-terminal domain maps to 12 to 218; sequence AIVMDQLLMG…EFLKETNLTI (207 aa). Residue 62 to 66 participates in (6S)-NADPHX binding; sequence NNGGD. K(+) contacts are provided by Asn63 and Asp127. (6S)-NADPHX-binding positions include 131 to 137 and Asp161; that span reads GYSFKGD. Ser164 contacts K(+).

This sequence belongs to the NnrE/AIBP family. K(+) is required as a cofactor.

The catalysed reaction is (6R)-NADHX = (6S)-NADHX. It carries out the reaction (6R)-NADPHX = (6S)-NADPHX. Its function is as follows. Catalyzes the epimerization of the S- and R-forms of NAD(P)HX, a damaged form of NAD(P)H that is a result of enzymatic or heat-dependent hydration. This is a prerequisite for the S-specific NAD(P)H-hydrate dehydratase to allow the repair of both epimers of NAD(P)HX. In Dictyostelium discoideum (Social amoeba), this protein is NAD(P)H-hydrate epimerase.